The primary structure comprises 3080 residues: MIGYFFVSLIYPFSLICSSVFRSNVVSYIYFIFFLLSILCLPHKSLILKNKISKTLPIITLVLSMFSLILQLLVNVVKVFQEQDELSVNILTAFGFYKYNSFWIVFRNVLPDVIVFVISLFTIILWFKNLVYPASINIKDSLKKTTSLNNVDQILNSPYVHGGSGNFNSGSNNNNNNNNIVYRPAGRGLTGFSFLMLTLSSISYPSIINVIYFVFTILIILLLASKLSIHKVMLKCYPILLITSLCHLLFVYLNQIEYFYMKYTVFKEQKWYGVLNYTEWDVTYWPLVIGYITVLLLYISTCILFRKQQLFNRTKPRYKQKLDKLGIMSDSNNNNNNNNKSRTTKLAIIFSKHGWTICCSQILVVCFFLTASVASAILLASGLICTLLPLKVFKKVIYIILLYFLVFISAQYIFNIPFSYSETDLQSYGLFSFNNSKWLYIGVQIVVSLTLSLYCFYSDIKDDDLGTIKKDQQSQQSQPQPQQQQQQQQSSQNNQIQQSPLQYQQPLPPTPISNKSLPSSPMSTKSTTVHIQNNNNGGGGGIIRPRKPLPPVPLGMIGKSSMAMTSNSSFGSNKPLNYIQQQQLQLQQQKVIGYQTSASINQLDINDSFSIAFPSLMLLTSGIGKGYDTFRGKYGGTFSKITSSLKAIAEITFLAIIGQSYRLALVGLFFCGLTSINLLNAGYMLFFIVFVISESLASRFWMCLIIYAQMVLLTLYIWQLSWISSYENDLTVLIGMTNYYGSPLWVGLIWHIIIITFSIIQWNVNKLYQRGLFSSSSSSSSSSNNNQNNNQNNQNNSYEDKFKNIPNFLLVFGDFIYRSVQQLSLPFCYLVIVIVSIFTKISLINIVYMATVFLCLLIHHISANGSIHIKRFWIIIILSQGVVLVARYIMQFNQVSHWLNSIFPKSNYISLSDIGLRNYSSSDRFIELFGCSSILVVCVFQLTVFFSIGQQQQQQQQQQQQQQQQQQQQQQQQQQQQQQQQQQQQQQQQQLNTSNNNNQNNNNLIIKKYTFFDSLLYIVKRICYLHGPKFVLWMVFAISIAEYNFFNFIYLIMIVISMSFKKGTYRIGSFLLFYSQLWVLTQLAALLPTVQSFNSDKFFMDWVGLRQPNVSTPWDAVKLNLAIILVISIQQTSYWWNKEIQNEKLEIKKKKQLKKQQQQQRKLEEHEEEYEEEEDQFGNKKNNDKLSLLSNDSIEIILDDGNNNNNNNNNNNNNNNNNNNNNNNNNNNNNNNNNNNNNNNQSNNENNENNNNSKKENLKKRLFWYISNFYELYGLECVFLVLAFALFWRLNILGMIYLIIIAVGLNIDKRNLHKLIYVSALLAPTILIQYLLILVVPTKENSYPWLDHPFFLNHKTIDNLLLLSIPDRYVLVIDFLVLFFSMLLFKQRNGYYLYKDFELHQQQQLNQQLNQQQHDSLKSIASSNSSSQKPLHPKNFFKFNSSIDGGDDDFTKEPRSWSNELRYMIIRYSSQVILIVIFLAGTAECDILSCFYVFFSVYVLFSGNAHSRKWSYLWKSLHIYNWLVLMAQIIFQVAVILYFQFKFNSNQMFEGHNHNHNHNHSSSSSSSSSGSIIDILSSQSSAIGIGGGNSSGSDSSYEVIENSLPTELYNIAVVFGFKIETGPLSISTISDVIIMVLLAYQKMIFQSRDFHILEEHLKAKRDLNYETAREFYKIRRNARIEQLNSIQDKITQRRSRLQHLKLKRINRRKNRHNHYYNNNPNNNYNNNNNNNNSNSSNSNNNNNDDDSNEPLSLGDNSFVPPKNTTNQNATNSTYSPFANSTMHMPPYENNNNNNNNNNNFNNNPLSNSSSTVSSFGVIEKPLEKKNWVKIYLNKILDWLDPLPDILIENYKKQQLQQQQKLEMNQSLLFGDQLQQEQQQQQEQQQQLNPQQQQSQSSKELPPILEQFEHNDDDFEISLNQAPGDYRNSIFIDSEQMRNAMQQMEQRRQQRLQQSIDASQLLQQQQQQQQASSSNTNTNSNNNNYNNNNNNNNNNNNNNNNNNNNNNNNNNNNNNNNNNNNNEIPKPNQTSSSTITLEPIEDEEEFLYKEKTQYFKRIIRGFSRIARDESKWLVFMACIANGVFYNSIISLVYLLAVFLYGRLFESPRPSKNFWRFMIGYSSLIICLKYVFQIPKNYYNCNENYHNSNNGTILMTSTSVYNTNNNINNNNQLNNNENYEWWQCPNTLLSEQNLLLTLPYVFGLYIIDGHFISGAFWDLAILLCCLWHRHVYRSKGLWNFQEKDFYVDQKQQSPLNLFNLDQQHFDQQQIDQIQNQQDLNNSPISLNSSNNNNNNNNNNNNNNNNNNNNNNNNNNNNNNNNDQTLIDINNNNNNNNNNNNNNNNNNNNNNNNNNNNNNNNNNNNNNNNNNNIIIDQILVDCSNEYDEEDQQQFNEFYDEEFDDRNEQEKENDEQEIQVIKKSSKSIAKIIIYPFKWLFVSIIEYVWLAIRTDEKPGRDYYMPLLFTDFACLFFLVIFPQNFTGIPSSDIAEFLEQNVIPRQYIVILLAQFGVIILDRIIYLYKSVKAKFVLQIVLTVLYHVFLFFYFPDLIVKPFSFGYTWPLVVFYLMKCIYLYYSALQICYGYPILSQNRFLMDGYSDFHNIGYALYKAIPFVYELRTLLDWIATDTTMLFYDWLKFEDLYSTIFSVKCRLEWIKRQGRQKGHKQPKFEKFVTGVTFFIGLVILLWFPLIILSSGLPGSNIEPVNNIQIEVSVVGWNPFLKINQDLSLESGDGDSTMDQNSFNNLKEDYSFLTTDDRQGIQNISINTFSEEIWNLSPPAKAQLINYLLTNTSLQIEVSYTLTRSGGVNSVIVGSNSVQLKPDQELNFYNILTRVQSNNSNNSNNPNENSSSGSDDNNNNSNNNIGSNSFIVEGLFYKFIKLPGVSGNPIYPTDNNGNVLALDALFTMNSTNFNNSNQPPQYFWQVNAYDSTKTYNISTLESIQFYTISSKLPNGITSTLVSAGIIGLYVSVVLSVGRFLRLSITQISIKIQLENLDSCDEILKMIDDVFIAREYGDLVLEEELYHELIQVFRQPQLLYSLTTFKNNQLNLPTTPTINSTLNNQNNQNNNNNNNNNHEKIN.

6 helical membrane passes run 28–48, 57–77, 86–106, 113–133, 204–224, and 232–252; these read YIYF…SLIL, PIIT…VNVV, LSVN…WIVF, VIVF…LVYP, YPSI…LLLA, and VMLK…LFVY. The N-linked (GlcNAc...) asparagine glycan is linked to N276. A helical transmembrane segment spans residues 285-305; the sequence is WPLVIGYITVLLLYISTCILF. N-linked (GlcNAc...) asparagine glycans are attached at residues N312 and N339. 2 consecutive transmembrane segments (helical) span residues 362 to 382 and 396 to 416; these read ILVV…LASG and VIYI…IFNI. N434 carries an N-linked (GlcNAc...) asparagine glycan. Residues 438-458 form a helical membrane-spanning segment; that stretch reads WLYIGVQIVVSLTLSLYCFYS. The segment at 469-548 is disordered; that stretch reads KKDQQSQQSQ…GGGIIRPRKP (80 aa). Low complexity predominate over residues 473–505; it reads QSQQSQPQPQQQQQQQQSSQNNQIQQSPLQYQQ. The span at 512–532 shows a compositional bias: polar residues; sequence ISNKSLPSSPMSTKSTTVHIQ. 3 N-linked (GlcNAc...) asparagine glycosylation sites follow: N514, N567, and N606. Transmembrane regions (helical) follow at residues 672-692, 700-720, and 740-760; these read GLTS…VFVI, FWMC…IWQL, and YGSP…FSII. An N-linked (GlcNAc...) asparagine glycan is attached at N795. 3 consecutive transmembrane segments (helical) span residues 827–847, 849–869, and 872–892; these read FCYL…INIV, MATV…SIHI, and FWII…IMQF. An N-linked (GlcNAc...) asparagine glycan is attached at N918. The helical transmembrane segment at 928–948 threads the bilayer; sequence LFGCSSILVVCVFQLTVFFSI. N-linked (GlcNAc...) asparagine glycosylation occurs at N992. Transmembrane regions (helical) follow at residues 1036 to 1056 and 1067 to 1087; these read FAIS…MIVI and IGSF…AALL. N-linked (GlcNAc...) asparagine glycosylation is present at N1109. Residues 1158–1185 are disordered; it reads QQQRKLEEHEEEYEEEEDQFGNKKNNDK. A compositionally biased stretch (acidic residues) spans 1166–1176; the sequence is HEEEYEEEEDQ. 3 N-linked (GlcNAc...) asparagine glycosylation sites follow: N1191, N1240, and N1251. The disordered stretch occupies residues 1199–1253; sequence DDGNNNNNNNNNNNNNNNNNNNNNNNNNNNNNNNNNNNNNNNQSNNENNENNNNS. A compositionally biased stretch (low complexity) spans 1202–1252; the sequence is NNNNNNNNNNNNNNNNNNNNNNNNNNNNNNNNNNNNNNNQSNNENNENNNN. The next 3 membrane-spanning stretches (helical) occupy residues 1281–1301, 1316–1336, and 1360–1380; these read VLAF…LIII, IYVS…ILVV, and LLLL…VLFF. N1424 and N1440 each carry an N-linked (GlcNAc...) asparagine glycan. The next 2 membrane-spanning stretches (helical) occupy residues 1472 to 1492 and 1519 to 1539; these read VILI…SCFY and IYNW…ILYF. 2 N-linked (GlcNAc...) asparagine glycosylation sites follow: N1559 and N1589. Residues 1619–1639 traverse the membrane as a helical segment; that stretch reads IETGPLSISTISDVIIMVLLA. Residues 1704 to 1714 show a composition bias toward basic residues; it reads RINRRKNRHNH. The interval 1704 to 1812 is disordered; that stretch reads RINRRKNRHN…NPLSNSSSTV (109 aa). Residues 1715–1742 are compositionally biased toward low complexity; the sequence is YYNNNPNNNYNNNNNNNNSNSSNSNNNN. Residues N1731, N1734, N1763, N1768, N1771, N1779, N1807, and N1864 are each glycosylated (N-linked (GlcNAc...) asparagine). The segment covering 1762 to 1782 has biased composition (polar residues); sequence KNTTNQNATNSTYSPFANSTM. A compositionally biased stretch (low complexity) spans 1789-1812; the sequence is NNNNNNNNNNNFNNNPLSNSSSTV. Disordered regions lie at residues 1873 to 1899 and 1958 to 2032; these read LQQE…SSKE and SQLL…TSSS. Low complexity predominate over residues 1958 to 2021; it reads SQLLQQQQQQ…NNNNNNNNNN (64 aa). N2027 carries N-linked (GlcNAc...) asparagine glycosylation. 2 consecutive transmembrane segments (helical) span residues 2078–2098 and 2112–2132; these read IANG…AVFL and FWRF…VFQI. N-linked (GlcNAc...) asparagine glycosylation occurs at N2148. The chain crosses the membrane as a helical span at residues 2199 to 2219; sequence VFGLYIIDGHFISGAFWDLAI. The segment at 2277–2367 is disordered; that stretch reads LNNSPISLNS…NNNNNNNNNN (91 aa). N2285 carries N-linked (GlcNAc...) asparagine glycosylation. The segment covering 2288-2367 has biased composition (low complexity); the sequence is NNNNNNNNNN…NNNNNNNNNN (80 aa). 2 helical membrane-spanning segments follow: residues 2427–2447 and 2457–2477; these read IIIY…WLAI and YYMP…IFPQ. N-linked (GlcNAc...) asparagine glycosylation occurs at N2478. 4 consecutive transmembrane segments (helical) span residues 2500 to 2520, 2530 to 2550, 2553 to 2573, and 2671 to 2691; these read YIVI…IYLY, QIVL…DLIV, FSFG…IYLY, and FVTG…PLII. N2762, N2790, N2837, N2840, N2848, N2858, N2908, N2913, and N2935 each carry an N-linked (GlcNAc...) asparagine glycan. The segment at 2835–2863 is disordered; the sequence is QSNNSNNSNNPNENSSSGSDDNNNNSNNN. Residues 2836 to 2863 are compositionally biased toward low complexity; sequence SNNSNNSNNPNENSSSGSDDNNNNSNNN. The chain crosses the membrane as a helical span at residues 2955–2975; that stretch reads ITSTLVSAGIIGLYVSVVLSV. The tract at residues 3054–3080 is disordered; it reads PTINSTLNNQNNQNNNNNNNNNHEKIN. N3057 is a glycosylation site (N-linked (GlcNAc...) asparagine). Low complexity predominate over residues 3061-3074; the sequence is NNQNNQNNNNNNNN.

The protein belongs to the PIEZO (TC 1.A.75) family.

It is found in the membrane. The polypeptide is Protein PIEZO homolog (Dictyostelium discoideum (Social amoeba)).